Here is a 294-residue protein sequence, read N- to C-terminus: Sarcotoxin II-2 (294 aa).

A signal peptide spans Met-1–Ala-22. The propeptide at Tyr-23 to Pro-24 is removed by a dipeptidylpeptidase. Gln-25 carries the post-translational modification Pyrrolidone carboxylic acid. At Arg-293 the chain carries Arginine amide.

The protein belongs to the attacin/sarcotoxin-2 family. Synthesized by the fat body and is eventually secreted into the hemolymph.

The protein resides in the secreted. Its function is as follows. Sarcotoxin II is an antibacterial protein which plays a role in the inflammatory response of this insect. The main effect of sarcotoxin II on E.coli may be the inhibition of cell wall synthesis, including septum formation. This is Sarcotoxin II-2 from Sarcophaga peregrina (Flesh fly).